A 967-amino-acid chain; its full sequence is Disks large homolog 1 (967 aa).

An L27 domain is found at 5-65 (SSEKAHKAIE…LYEQTLLSER (61 aa)). The PDZ 1 domain maps to 202–289 (NIVLEKGHTG…VVSLSLKRRK (88 aa)). The tract at residues 324 to 351 (IHSPSAPIHPPPPPPVHHGSLSQLSVGQ) is disordered. Positions 330-339 (PIHPPPPPPV) are enriched in pro residues. PDZ domains follow at residues 361 to 448 (VIDL…QQGT) and 510 to 591 (PVQL…QYRP). Residues 619 to 690 (RKSEYVRALF…PSKKRVEKRE (72 aa)) enclose the SH3 domain. A disordered region spans residues 673-723 (EETAEGVIPSKKRVEKRERLRRKQVNFNSGSQSLGRNSSTTGLENRRGSRS). The segment covering 682–696 (SKKRVEKRERLRRKQ) has biased composition (basic residues). A compositionally biased stretch (polar residues) spans 697-715 (VNFNSGSQSLGRNSSTTGL). The 187-residue stretch at 769-955 (VRPVIILGAL…VLSKVYSIIS (187 aa)) folds into the Guanylate kinase-like domain.

The protein belongs to the MAGUK family. Homooligomerizes; requires L27 domain. Interacts (via L27 domain) with ajm-1; the interaction regulates ajm-1 apical junction location. Expressed in the apical junctions in the hypodermis. Expressed in epithelial cells in the reproductive system including vulva, uterus and spermatheca.

The protein localises to the membrane. It localises to the apical cell membrane. It is found in the cell junction. The protein resides in the adherens junction. Its subcellular location is the lateral cell membrane. The protein localises to the cytoplasm. Its function is as follows. Essential multidomain scaffolding protein required for normal development. Recruits channels, receptors and signaling molecules to discrete plasma membrane domains in polarized cells. Required for proper embryonic elongation. Acts upstream of ajm-1 and becomes localized to apical junctions independently of ajm-1. With let-413, cooperatively regulates ajm-1 localization to apical junctions and the establishment of newly formed epithelia. Plays a role in assembling the adherens junction by clustering ajm-1 and other proteins, to form electron-dense structures; may form a compartment distinct to that of hmp-1 and associated proteins. Plays a role in the directed outgrowth of seam cells, towards neighboring seam cells, during larval development. The protein is Disks large homolog 1 of Caenorhabditis elegans.